The primary structure comprises 260 residues: HTH-type transcriptional repressor NanR (260 aa).

The HTH gntR-type domain maps to 27–95 (KKLSEMVEEE…NGERARISRP (69 aa)). Positions 55–74 (ERELMAFFNVGRPSVREALA) form a DNA-binding region, H-T-H motif.

This sequence belongs to the NanR family.

Its function is as follows. Transcriptional repressor that controls expression of the genes required for the catabolism of sialic acids. The polypeptide is HTH-type transcriptional repressor NanR (Edwardsiella tarda (strain FL6-60)).